The following is a 156-amino-acid chain: Rhombotin-1 (156 aa).

2 consecutive LIM zinc-binding domains span residues 22-84 (KGCA…LFGT) and 86-148 (GNCA…GHLN).

In terms of tissue distribution, expressed in the brain and not in the thymus.

Its subcellular location is the nucleus. In terms of biological role, may be involved in gene regulation within neural lineage cells potentially by direct DNA binding or by binding to other transcription factors. This Mus musculus (Mouse) protein is Rhombotin-1 (Lmo1).